Consider the following 117-residue polypeptide: Appetite-regulating hormone (117 aa).

Positions 1–23 (MPSLGTMCSLLLFSVLWVDLAMA) are cleaved as a signal peptide. Ser-26 is lipidated: O-decanoyl serine; alternate. A lipid anchor (O-hexanoyl serine; alternate) is attached at Ser-26. Residue Ser-26 is the site of O-octanoyl serine; alternate attachment. Residues 30 to 68 (PEHQKLQQRKESKKPPAKLQPRALEGSLGPEDTSQVEEA) are disordered. Residues 31–43 (EHQKLQQRKESKK) are compositionally biased toward basic and acidic residues. A propeptide spans 52–75 (ALEGSLGPEDTSQVEEAEDELEIR) (removed in mature form). Leu-98 bears the Leucine amide mark. Residues 99–117 (GKFLQEVLWEDTNEALADE) constitute a propeptide, removed in mature form.

It belongs to the motilin family. Post-translationally, O-octanoylated by GOAT/MBOAT4. O-octanoylation is essential for ghrelin activity. Amidation of Leu-98 is essential for obestatin activity.

The protein resides in the secreted. Functionally, ghrelin is the ligand for growth hormone secretagogue receptor type 1 (GHSR). Induces the release of growth hormone from the pituitary. Has an appetite-stimulating effect, induces adiposity and stimulates gastric acid secretion. Involved in growth regulation. Its function is as follows. Obestatin may be the ligand for GPR39. May have an appetite-reducing effect resulting in decreased food intake. May reduce gastric emptying activity and jejunal motility. This Canis lupus familiaris (Dog) protein is Appetite-regulating hormone (GHRL).